The primary structure comprises 103 residues: Putative inactive recombination-promoting nuclease-like protein YjiP (103 aa).

Belongs to the Rpn/YhgA-like nuclease family.

Its function is as follows. This pseudogene is the N-terminal fragment of low activity DNA endonuclease RpnD which probably yields 3'-hydroxyl ends. The intact protein can be seen in this entry (AC B7NGZ6). Expression of the repaired protein increases the frequency of recA-independent recombination, but also decreases viability probably via DNA damage; in a RecA strain expression has no effect on viability but does induce the SOS repair response. May play a role in horizontal gene transfer. This is Putative inactive recombination-promoting nuclease-like protein YjiP (yjiP) from Escherichia coli (strain K12).